The chain runs to 161 residues: Lipid droplet assembly factor 1 (161 aa).

Topologically, residues 1–43 (MAKEEPQSISRDLQELQKKLSLLIDSFQNNSKVVAFMKSPVGQ) are cytoplasmic. The chain crosses the membrane as a helical span at residues 44–61 (YLDSHPFLAFTLLVFIVM). Topologically, residues 62 to 67 (SAVPVG) are lumenal. Residues 68-87 (FFLLIVVLTTLAALLGVIIL) form a helical membrane-spanning segment. The Cytoplasmic portion of the chain corresponds to 88–93 (EGLVIS). The chain crosses the membrane as a helical span at residues 94–110 (VGGFSLLCILCGLGFVS). The Lumenal portion of the chain corresponds to 111–116 (LAMSGM). A helical transmembrane segment spans residues 117-133 (MIASYVVVSSLISCWFS). Residues 134–161 (PRPLTQQNTSCDFLPAMKSAEFEGLYQE) are Cytoplasmic-facing.

Belongs to the LDAF1 family. Interacts with isoform 1 and isoform 3 of BSCL2/seipin to form an oligomeric complex. As to expression, expressed at high levels in the heart and skeletal muscle. Expressed at low levels in kidney, small intestine, lung and liver.

The protein resides in the endoplasmic reticulum membrane. It localises to the lipid droplet. Plays an important role in the formation of lipid droplets (LD) which are storage organelles at the center of lipid and energy homeostasis. In association with BSCL2/seipin, defines the sites of LD formation in the endoplasmic reticulum. This chain is Lipid droplet assembly factor 1, found in Homo sapiens (Human).